The chain runs to 432 residues: 5-hydroxybenzimidazole synthase BzaA (432 aa).

Residues methionine 95, tyrosine 124, histidine 163, 185–187 (SYG), and 226–229 (DGMR) contribute to the substrate site. A Zn(2+)-binding site is contributed by histidine 269. Phenylalanine 292 provides a ligand contact to substrate. Histidine 333 serves as a coordination point for Zn(2+). [4Fe-4S] cluster-binding residues include cysteine 409, cysteine 412, and cysteine 416.

This sequence belongs to the ThiC family. 5-hydroxybenzimidazole synthase subfamily. [4Fe-4S] cluster serves as cofactor.

The enzyme catalyses 5-amino-1-(5-phospho-beta-D-ribosyl)imidazole + AH2 + S-adenosyl-L-methionine = 5-hydroxybenzimidazole + 5'-deoxyadenosine + formate + L-methionine + A + NH4(+) + phosphate + 2 H(+). In terms of biological role, together with BzaB, probably catalyzes the conversion of aminoimidazole ribotide (AIR) to 5-hydroxybenzimidazole (5-HBI) in a radical S-adenosyl-L-methionine (SAM)-dependent reaction. Is thus involved in the anaerobic biosynthesis of the benzimidazole lower axial ligand of the cobamide produced by M.thermoacetica. Requires BzaB for catalytic activity, as BzaA alone displays no activity. This Moorella thermoacetica (strain ATCC 39073 / JCM 9320) protein is 5-hydroxybenzimidazole synthase BzaA.